The sequence spans 1755 residues: Transposon Ty1-PR1 Gag-Pol polyprotein (1755 aa).

Polar residues-rich tracts occupy residues 1 to 23 (MESQ…SVTS), 48 to 60 (TKAN…TPAS), 71 to 93 (SPQT…MMTQ), and 127 to 152 (QSQF…GNTF). Disordered stretches follow at residues 1-93 (MESQ…MMTQ), 126-173 (PQSQ…RPPP), and 352-421 (GSRN…SKST). Low complexity predominate over residues 153–165 (TDSSSADSDMTST). The RNA-binding stretch occupies residues 299-401 (NNGIHINNKV…NSKSKTARAH (103 aa)). A compositionally biased stretch (low complexity) spans 402–418 (NVSTSNNSPSTDNDSIS). Serine 416 is modified (phosphoserine). Aspartate 461 (for protease activity; shared with dimeric partner) is an active-site residue. The interval 583 to 640 (NVHTSESTRKYPYPFIHRMLAHANAQTIRYSLKNNTITYFNESDVDWSSAIDYQCPDC) is integrase-type zinc finger-like. Residues 660 to 835 (NSYEPFQYLH…AGLDISTLLP (176 aa)) enclose the Integrase catalytic domain. Residues aspartate 671 and aspartate 736 each coordinate Mg(2+). Disordered stretches follow at residues 956–1087 (SKAV…ETEK), 1092–1111 (RSPS…NIVP), and 1130–1187 (DLPL…DNET). Residues 960–969 (SPTDSTPPST) are compositionally biased toward low complexity. A compositionally biased stretch (polar residues) spans 1005-1015 (STPQISNIEST). A compositionally biased stretch (basic and acidic residues) spans 1038-1053 (ESSHASKSKDFRHSDS). Polar residues-rich tracts occupy residues 1054–1082 (YSEN…QISD) and 1101–1111 (PENNSSHNIVP). The short motif at 1178-1212 (KKRSLEDNETEIKVSRDTWNTKNMRSLEPPRSKKR) is the Bipartite nuclear localization signal element. The 139-residue stretch at 1338–1476 (NNYYITQLDI…DILGLEIKYQ (139 aa)) folds into the Reverse transcriptase Ty1/copia-type domain. Aspartate 1346, aspartate 1427, aspartate 1428, aspartate 1610, glutamate 1652, and aspartate 1685 together coordinate Mg(2+). An RNase H Ty1/copia-type domain is found at 1610–1752 (DASYGNQPYY…IKTFKLLTNK (143 aa)).

In terms of assembly, the capsid protein forms a homotrimer, from which the VLPs are assembled. The protease is a homodimer, whose active site consists of two apposed aspartic acid residues. In terms of processing, initially, virus-like particles (VLPs) are composed of the structural unprocessed proteins Gag and Gag-Pol, and also contain the host initiator methionine tRNA (tRNA(i)-Met) which serves as a primer for minus-strand DNA synthesis, and a dimer of genomic Ty RNA. Processing of the polyproteins occurs within the particle and proceeds by an ordered pathway, called maturation. First, the protease (PR) is released by autocatalytic cleavage of the Gag-Pol polyprotein yielding capsid protein p45 and a Pol-p154 precursor protein. This cleavage is a prerequisite for subsequent processing of Pol-p154 at the remaining sites to release the mature structural and catalytic proteins. Maturation takes place prior to the RT reaction and is required to produce transposition-competent VLPs.

The protein localises to the cytoplasm. It localises to the nucleus. The enzyme catalyses DNA(n) + a 2'-deoxyribonucleoside 5'-triphosphate = DNA(n+1) + diphosphate. It catalyses the reaction Endonucleolytic cleavage to 5'-phosphomonoester.. Functionally, capsid protein (CA) is the structural component of the virus-like particle (VLP), forming the shell that encapsulates the retrotransposons dimeric RNA genome. The particles are assembled from trimer-clustered units and there are holes in the capsid shells that allow for the diffusion of macromolecules. CA also has nucleocapsid-like chaperone activity, promoting primer tRNA(i)-Met annealing to the multipartite primer-binding site (PBS), dimerization of Ty1 RNA and initiation of reverse transcription. Its function is as follows. The aspartyl protease (PR) mediates the proteolytic cleavages of the Gag and Gag-Pol polyproteins after assembly of the VLP. In terms of biological role, reverse transcriptase/ribonuclease H (RT) is a multifunctional enzyme that catalyzes the conversion of the retro-elements RNA genome into dsDNA within the VLP. The enzyme displays a DNA polymerase activity that can copy either DNA or RNA templates, and a ribonuclease H (RNase H) activity that cleaves the RNA strand of RNA-DNA heteroduplexes during plus-strand synthesis and hydrolyzes RNA primers. The conversion leads to a linear dsDNA copy of the retrotransposon that includes long terminal repeats (LTRs) at both ends. Integrase (IN) targets the VLP to the nucleus, where a subparticle preintegration complex (PIC) containing at least integrase and the newly synthesized dsDNA copy of the retrotransposon must transit the nuclear membrane. Once in the nucleus, integrase performs the integration of the dsDNA into the host genome. The sequence is that of Transposon Ty1-PR1 Gag-Pol polyprotein (TY1B-PR1) from Saccharomyces cerevisiae (strain ATCC 204508 / S288c) (Baker's yeast).